The primary structure comprises 778 residues: High affinity nerve growth factor receptor (778 aa).

The first 14 residues, W1–L14, serve as a signal peptide directing secretion. Residues A15–G400 are Extracellular-facing. A disulfide bridge connects residues C18 and C20. 2 LRR repeats span residues D71–D92 and R95–H116. Residues N100, N130, N143, N151, N194, N234, N262, N300, N320, N340, and N384 are each glycosylated (N-linked (GlcNAc...) asparagine). The LRRCT domain maps to N127–P175. A disulfide bond links C133 and C173. Ig-like C2-type domains are found at residues P175–N262 and W281–N347. A disulfide bond links C282 and C327. The helical transmembrane segment at V401–A421 threads the bilayer. Topologically, residues L422–G778 are cytoplasmic. Y479 is modified (phosphotyrosine; by autocatalysis). One can recognise a Protein kinase domain in the interval I493 to L763. ATP is bound by residues L499–V507 and K527. The active-site Proton acceptor is D633. Residues Y659, Y663, Y664, and Y773 each carry the phosphotyrosine; by autocatalysis modification.

It belongs to the protein kinase superfamily. Tyr protein kinase family. Insulin receptor subfamily. As to quaternary structure, exists in a dynamic equilibrium between monomeric (low affinity) and dimeric (high affinity) structures. Homodimerization is induced by NGF dimer binding. Interacts with PTPRS. In terms of processing, ligand-mediated auto-phosphorylation. Post-translationally, ubiquitinated. Undergoes polyubiquitination upon activation; regulated by NGFR. Ubiquitination regulates the internalization of the receptor.

Its subcellular location is the cell membrane. The protein resides in the early endosome membrane. It is found in the late endosome membrane. The protein localises to the recycling endosome membrane. It carries out the reaction L-tyrosyl-[protein] + ATP = O-phospho-L-tyrosyl-[protein] + ADP + H(+). The pro-survival signaling effect of NTRK1 in neurons requires its endocytosis into signaling early endosomes and its retrograde axonal transport. Its function is as follows. Receptor tyrosine kinase involved in the development and the maturation of the central and peripheral nervous systems through regulation of proliferation, differentiation and survival of sympathetic and nervous neurons. High affinity receptor for NGF which is its primary ligand, it can also bind and be activated by NTF3/neurotrophin-3. Upon dimeric NGF ligand-binding, undergoes homodimerization, autophosphorylation and activation. Recruits, phosphorylates and/or activates several downstream effectors that regulate distinct overlapping signaling cascades driving cell survival and differentiation. In absence of ligand and activation, may promote cell death, making the survival of neurons dependent on trophic factors. This Gallus gallus (Chicken) protein is High affinity nerve growth factor receptor (NTRK1).